The primary structure comprises 463 residues: Cysteine--tRNA ligase (463 aa).

A Zn(2+)-binding site is contributed by cysteine 27. The 'HIGH' region motif lies at methionine 29–histidine 39. Residues cysteine 208, histidine 233, and glutamate 237 each contribute to the Zn(2+) site. A 'KMSKS' region motif is present at residues lysine 265–serine 269. Lysine 268 lines the ATP pocket.

This sequence belongs to the class-I aminoacyl-tRNA synthetase family. As to quaternary structure, monomer. Zn(2+) is required as a cofactor.

It is found in the cytoplasm. It carries out the reaction tRNA(Cys) + L-cysteine + ATP = L-cysteinyl-tRNA(Cys) + AMP + diphosphate. This is Cysteine--tRNA ligase from Marinobacter nauticus (strain ATCC 700491 / DSM 11845 / VT8) (Marinobacter aquaeolei).